A 111-amino-acid polypeptide reads, in one-letter code: uncharacterized protein (111 aa).

Positions 12–34 are disordered; the sequence is AWCPSRPPASAPSAPQEAARRGD. Positions 71–76 are required for interaction with PPP3CA; it reads PNIIIT. Threonine 79 and threonine 81 each carry phosphothreonine.

As to quaternary structure, interacts (via PxIxIT motif, when phosphorylated on Thr-79) with PPP3CA.

This is an uncharacterized protein from Mus musculus (Mouse).